The primary structure comprises 424 residues: Probable serine/threonine-protein kinase PBL6 (424 aa).

Residues 1 to 26 (MGCFGRTPKSNKRSDTKTTKNNDFTP) are disordered. A lipid anchor (N-myristoyl glycine) is attached at G2. A lipid anchor (S-palmitoyl cysteine) is attached at C3. Position 87 is a phosphothreonine (T87). A Protein kinase domain is found at 98–377 (FKSDCFLGEG…VVMALDHLAS (280 aa)). Residues 104–112 (LGEGGFGKV) and K127 contribute to the ATP site. Y172 is modified (phosphotyrosine). The active-site Proton acceptor is the D225. 2 positions are modified to phosphoserine: S229 and S259. A phosphothreonine mark is found at T260 and T265. A Phosphotyrosine modification is found at Y273.

This sequence belongs to the protein kinase superfamily. Ser/Thr protein kinase family.

The protein localises to the cell membrane. It carries out the reaction L-seryl-[protein] + ATP = O-phospho-L-seryl-[protein] + ADP + H(+). It catalyses the reaction L-threonyl-[protein] + ATP = O-phospho-L-threonyl-[protein] + ADP + H(+). May be involved in plant defense signaling. In Arabidopsis thaliana (Mouse-ear cress), this protein is Probable serine/threonine-protein kinase PBL6.